Here is a 498-residue protein sequence, read N- to C-terminus: Sugar transport protein 2 (498 aa).

Topologically, residues 1 to 22 (MAVGSMNVEEGTKAFPAKLTGQ) are cytoplasmic. 12 consecutive transmembrane segments (helical) span residues 23 to 43 (VFLC…DIGI), 80 to 100 (LLQL…FISS), 117 to 137 (IFFL…MLIG), 140 to 160 (ILLG…ISEI), 167 to 187 (GGLN…ASYV), 200 to 220 (YSLG…FFIH), 288 to 308 (LQFF…PVLF), 320 to 340 (ISTV…LLVV), 348 to 368 (LLME…GILL), 381 to 401 (AVPL…AWSW), 421 to 441 (GYFC…QFFL), and 450 to 470 (LLFF…VFFL). Residues 471–498 (PETKGVPIEEMAEKRWKTHPRWKKYFKD) are Cytoplasmic-facing.

Belongs to the major facilitator superfamily. Sugar transporter (TC 2.A.1.1) family. Pollen specific (at protein level).

It is found in the membrane. Functionally, mediates an active uptake of hexoses, probably by sugar/hydrogen symport. Can transport glucose, 3-O-methylglucose, xylose, mannose, fructose and galactose. The polypeptide is Sugar transport protein 2 (STP2) (Arabidopsis thaliana (Mouse-ear cress)).